Reading from the N-terminus, the 492-residue chain is GTPase Der (492 aa).

2 EngA-type G domains span residues 3–166 (PVVA…VDEV) and 205–378 (IKLA…DSAT). GTP-binding positions include 9 to 16 (GRPNVGKS), 56 to 60 (DTGGI), 118 to 121 (NKTD), 211 to 218 (GRPNVGKS), 258 to 262 (DTAGV), and 323 to 326 (NKWD). The KH-like domain occupies 379 to 463 (RRVSTAMLTR…PIRIQFKEGE (85 aa)).

Belongs to the TRAFAC class TrmE-Era-EngA-EngB-Septin-like GTPase superfamily. EngA (Der) GTPase family. In terms of assembly, associates with the 50S ribosomal subunit.

GTPase that plays an essential role in the late steps of ribosome biogenesis. This chain is GTPase Der, found in Klebsiella pneumoniae subsp. pneumoniae (strain ATCC 700721 / MGH 78578).